A 111-amino-acid polypeptide reads, in one-letter code: Cytochrome c (111 aa).

Position 1 is an N-acetylalanine (alanine 1). Heme c-binding residues include cysteine 22, cysteine 25, and histidine 26. An N6,N6,N6-trimethyllysine modification is found at lysine 80. Methionine 88 serves as a coordination point for heme c. Lysine 94 bears the N6,N6,N6-trimethyllysine mark.

Belongs to the cytochrome c family. Post-translationally, binds 1 heme c group covalently per subunit.

The protein localises to the mitochondrion intermembrane space. In terms of biological role, electron carrier protein. The oxidized form of the cytochrome c heme group can accept an electron from the heme group of the cytochrome c1 subunit of cytochrome reductase. Cytochrome c then transfers this electron to the cytochrome oxidase complex, the final protein carrier in the mitochondrial electron-transport chain. The chain is Cytochrome c from Nigella damascena (Love-in-a-mist).